A 359-amino-acid polypeptide reads, in one-letter code: E3 ubiquitin-protein ligase RNF146 (359 aa).

Residues 38-76 (CAICLQTCVHPVSLPCKHVFCYLCVKGASWLGKRCALCR) form an RING-type zinc finger. Residues K86 and K96 each participate in a glycyl lysine isopeptide (Lys-Gly) (interchain with G-Cter in ubiquitin) cross-link. Residues 93-169 (EELKAASRGN…EHGRRRKIKR (77 aa)) enclose the WWE domain. Residues Y109, R112, and W116 each contribute to the a glycoprotein site. K132 is covalently cross-linked (Glycyl lysine isopeptide (Lys-Gly) (interchain with G-Cter in ubiquitin)). Positions 146, 155, 165, and 177 each coordinate a glycoprotein. Residue K177 forms a Glycyl lysine isopeptide (Lys-Gly) (interchain with G-Cter in ubiquitin) linkage. Disordered stretches follow at residues 197-243 (SSAD…DAGI) and 261-359 (ERSH…VTEV). Residues 199–212 (ADGADSGSAQTGAS) are compositionally biased toward low complexity. The segment covering 217-235 (VPSSTRPLTSVDGQLTSPV) has biased composition (polar residues). Residues 284–298 (SVEETESDASSDSED) show a composition bias toward acidic residues. Phosphoserine occurs at positions 290 and 294. A compositionally biased stretch (polar residues) spans 306–324 (HSLTQQRPLVPNGNQTVAD).

As to quaternary structure, can form homooligomers. Interacts with PARsylated AXIN1, AXIN2, BLZF1, CASC3, H1-2, IPO7, LIG3, NCL, PARP1, XRCC1, XRCC5 and XRCC6. Interacts with DDB1, DHX15, IQGAP1, LRPPRC, PARP2, PRKDC, RUVBL2, TNKS1 and TNKS2. Binding often leads to interactor ubiquitination, in the presence of the appropriate E1 and E2 enzymes, and proteasomal degradation. In terms of processing, ubiquitinated; autoubiquitinated. Autoubiquitination is enhanced upon PAR-binding. Expressed at relatively high levels in the brain. Also present in spleen, heart, kidney, testis and liver. In the brain, expressed in the cerebellum, hippocampus, striatum, cortex, frontal cortex and, at lowest levels, in olfactory bulb (at protein level). Predominantly expressed in neurons.

The protein localises to the cytoplasm. It is found in the cytosol. It localises to the nucleus. The enzyme catalyses S-ubiquitinyl-[E2 ubiquitin-conjugating enzyme]-L-cysteine + [acceptor protein]-L-lysine = [E2 ubiquitin-conjugating enzyme]-L-cysteine + N(6)-ubiquitinyl-[acceptor protein]-L-lysine.. Its pathway is protein modification; protein ubiquitination. Its function is as follows. E3 ubiquitin-protein ligase that specifically binds poly-ADP-ribosylated (PARsylated) proteins and mediates their ubiquitination and subsequent degradation. May regulate many important biological processes, such as cell survival and DNA damage response. Acts as an activator of the Wnt signaling pathway by mediating the ubiquitination of PARsylated AXIN1 and AXIN2, 2 key components of the beta-catenin destruction complex. Acts in cooperation with tankyrase proteins (TNKS and TNKS2), which mediate PARsylation of target proteins AXIN1, AXIN2, BLZF1, CASC3, TNKS and TNKS2. Recognizes and binds tankyrase-dependent PARsylated proteins via its WWE domain and mediates their ubiquitination, leading to their degradation. Different ubiquitin linkage types have been observed: TNKS2 undergoes ubiquitination at 'Lys-48' and 'Lys-63', while AXIN1 is only ubiquitinated at 'Lys-48'. May regulate TNKS and TNKS2 subcellular location, preventing aggregation at a centrosomal location. Neuroprotective protein. Protects the brain against N-methyl-D-aspartate (NMDA) receptor-mediated glutamate excitotoxicity and ischemia, by interfering with PAR-induced cell death, called parthanatos. Prevents nuclear translocation of AIFM1 in a PAR-binding dependent manner. Does not affect PARP1 activation. Protects against cell death induced by DNA damaging agents, such as N-methyl-N-nitro-N-nitrosoguanidine (MNNG) and rescues cells from G1 arrest. Promotes cell survival after gamma-irradiation. Facilitates DNA repair. This is E3 ubiquitin-protein ligase RNF146 (Rnf146) from Mus musculus (Mouse).